Here is a 262-residue protein sequence, read N- to C-terminus: Sperm microtubule inner protein 6 (262 aa).

Belongs to the SPMIP6 family. In terms of assembly, microtubule inner protein component of sperm flagellar doublet microtubules. Interacts with alpha-tubulin.

Its subcellular location is the cytoplasm. The protein localises to the cytoskeleton. The protein resides in the nucleus. It localises to the mitochondrion. It is found in the flagellum axoneme. May participate in intramanchette transport and midpiece formation of the sperm tail. May play a potential role in somatic cell proliferation. This Macaca fascicularis (Crab-eating macaque) protein is Sperm microtubule inner protein 6 (SPMIP6).